Consider the following 681-residue polypeptide: uncharacterized protein (681 aa).

It in the N-terminal section; belongs to the purine/pyrimidine phosphoribosyltransferase family.

This is an uncharacterized protein from Mycobacterium tuberculosis (strain CDC 1551 / Oshkosh).